The primary structure comprises 34 residues: Photosystem II reaction center protein M (34 aa).

Residues 7–27 (GFIATILFVLVPTVFLLILYI) form a helical membrane-spanning segment.

The protein belongs to the PsbM family. As to quaternary structure, PSII is composed of 1 copy each of membrane proteins PsbA, PsbB, PsbC, PsbD, PsbE, PsbF, PsbH, PsbI, PsbJ, PsbK, PsbL, PsbM, PsbT, PsbX, PsbY, PsbZ, Psb30/Ycf12, peripheral proteins PsbO, CyanoQ (PsbQ), PsbU, PsbV and a large number of cofactors. It forms dimeric complexes.

The protein localises to the cellular thylakoid membrane. One of the components of the core complex of photosystem II (PSII). PSII is a light-driven water:plastoquinone oxidoreductase that uses light energy to abstract electrons from H(2)O, generating O(2) and a proton gradient subsequently used for ATP formation. It consists of a core antenna complex that captures photons, and an electron transfer chain that converts photonic excitation into a charge separation. This subunit is found at the monomer-monomer interface. This is Photosystem II reaction center protein M from Picosynechococcus sp. (strain ATCC 27264 / PCC 7002 / PR-6) (Agmenellum quadruplicatum).